The following is a 35-amino-acid chain: Photosystem II reaction center protein T (35 aa).

The chain crosses the membrane as a helical span at residues 3-23; that stretch reads ALVYTFLLVSTLGIIFFAIFF.

This sequence belongs to the PsbT family. In terms of assembly, PSII is composed of 1 copy each of membrane proteins PsbA, PsbB, PsbC, PsbD, PsbE, PsbF, PsbH, PsbI, PsbJ, PsbK, PsbL, PsbM, PsbT, PsbY, PsbZ, Psb30/Ycf12, at least 3 peripheral proteins of the oxygen-evolving complex and a large number of cofactors. It forms dimeric complexes.

It is found in the plastid. Its subcellular location is the chloroplast thylakoid membrane. In terms of biological role, found at the monomer-monomer interface of the photosystem II (PS II) dimer, plays a role in assembly and dimerization of PSII. PSII is a light-driven water plastoquinone oxidoreductase, using light energy to abstract electrons from H(2)O, generating a proton gradient subsequently used for ATP formation. The chain is Photosystem II reaction center protein T from Suaeda aralocaspica (Seablite).